A 134-amino-acid polypeptide reads, in one-letter code: Replication enhancer protein (134 aa).

It belongs to the geminiviridae replication enhancer protein family. Homooligomer. Interacts with the replication-associated protein (REP). Interacts with host proliferating cell nuclear antigen (PCNA). Interacts with host retinoblastoma-related protein 1 (RBR1), and may thereby deregulate the host cell cycle. Oligomerization and interaction with PCNA are necessary for optimal replication enhancement.

Increases viral DNA accumulation. Enhances infectivity and symptom expression. The protein is Replication enhancer protein of Manihot esculenta (Cassava).